We begin with the raw amino-acid sequence, 934 residues long: MVPEAWRSGLVSTGRVVGVLLLLGALNKASTVIHYEIPEEREKGFAVGNVVANLGLDLGSLSARRFRVVSGASRRFFEVNRETGEMFVNDRLDREELCGTLPSCTVTLELVVENPLELFSVEVVIQDINDNNPAFPTQEMKLEISEAVAPGTRFPLESAHDPDVGSNSLQTYELSRNEYFALRVQTREDSTKYAELVLERALDREREPSLQLVLTALDGGTPALSASLPIHIKVLDANDNAPVFNQSLYRARVLEDAPSGTRVVQVLATDLDEGPNGEIIYSFGSHNRAGVRQLFALDLVTGMLTIKGRLDFEDTKLHEIYIQAKDKGANPEGAHCKVLVEVVDVNDNAPEITVTSVYSPVPEDAPLGTVIALLSVTDLDAGENGLVTCEVPPGLPFSLTSSLKNYFTLKTSADLDRETVPEYNLSITARDAGTPSLSALTIVRVQVSDINDNPPQSSQSSYDVYIEENNLPGAPILNLSVWDPDAPQNARLSFFLLEQGAETGLVGRYFTINRDNGIVSSLVPLDYEDRREFELTAHISDGGTPVLATNISVNIFVTDRNDNAPQVLYPRPGGSSVEMLPRGTSAGHLVSRVVGWDADAGHNAWLSYSLLGSPNQSLFAIGLHTGQISTARPVQDTDSPRQTLTVLIKDNGEPSLSTTATLTVSVTEDSPEARAEFPSGSAPREQKKNLTFYLLLSLILVSVGFVVTVFGVIIFKVYKWKQSRDLYRAPVSSLYRTPGPSLHADAVRGGLMSPHLYHQVYLTTDSRRSDPLLKKPGAASPLASRQNTLRSCDPVFYRQVLGAESAPPGQQAPPNTDWRFSQAQRPGTSGSQNGDDTGTWPNNQFDTEMLQAMILASASEAADGSSTLGGGAGTMGLSARYGPQFTLQHVPDYRQNVYIPGSNATLTNAAGKRDGKAPAGGNGNKKKSGKKEKK.

The N-terminal stretch at 1-31 (MVPEAWRSGLVSTGRVVGVLLLLGALNKAST) is a signal peptide. Cadherin domains follow at residues 32 to 135 (VIHY…NPAF), 136 to 244 (PTQE…APVF), 245 to 352 (NQSL…APEI), 353 to 457 (TVTS…PPQS), 458 to 567 (SQSS…APQV), and 572 to 685 (PGGS…APRE). Over 32 to 693 (VIHYEIPEER…REQKKNLTFY (662 aa)) the chain is Extracellular. Residues N245, N424, N478, N550, N615, and N689 are each glycosylated (N-linked (GlcNAc...) asparagine). A helical membrane pass occupies residues 694–714 (LLLSLILVSVGFVVTVFGVII). The Cytoplasmic segment spans residues 715–934 (FKVYKWKQSR…KKKSGKKEKK (220 aa)). 2 disordered regions span residues 804–843 (ESAP…WPNN) and 904–934 (ATLT…KEKK). Residues 812–843 (APPNTDWRFSQAQRPGTSGSQNGDDTGTWPNN) are compositionally biased toward polar residues. A compositionally biased stretch (basic residues) spans 924-934 (NKKKSGKKEKK).

It is found in the cell membrane. In terms of biological role, potential calcium-dependent cell-adhesion protein. May be involved in the establishment and maintenance of specific neuronal connections in the brain. This is Protocadherin gamma-C3 (PCDHGC3) from Homo sapiens (Human).